The primary structure comprises 374 residues: Anhydro-N-acetylmuramic acid kinase (374 aa).

ATP is bound at residue 12 to 19 (GTSLDGVD).

The protein belongs to the anhydro-N-acetylmuramic acid kinase family.

It carries out the reaction 1,6-anhydro-N-acetyl-beta-muramate + ATP + H2O = N-acetyl-D-muramate 6-phosphate + ADP + H(+). It functions in the pathway amino-sugar metabolism; 1,6-anhydro-N-acetylmuramate degradation. It participates in cell wall biogenesis; peptidoglycan recycling. In terms of biological role, catalyzes the specific phosphorylation of 1,6-anhydro-N-acetylmuramic acid (anhMurNAc) with the simultaneous cleavage of the 1,6-anhydro ring, generating MurNAc-6-P. Is required for the utilization of anhMurNAc either imported from the medium or derived from its own cell wall murein, and thus plays a role in cell wall recycling. The protein is Anhydro-N-acetylmuramic acid kinase of Escherichia fergusonii (strain ATCC 35469 / DSM 13698 / CCUG 18766 / IAM 14443 / JCM 21226 / LMG 7866 / NBRC 102419 / NCTC 12128 / CDC 0568-73).